A 449-amino-acid polypeptide reads, in one-letter code: Keratin, type I cuticular Ha7 (449 aa).

Positions 1 to 104 are head; that stretch reads MTSFYSTSSC…YGKNTLNGHE (104 aa). Residues 104 to 415 form the IF rod domain; sequence EKETMKFLND…NLLESEDCKL (312 aa). The tract at residues 105–139 is coil 1A; sequence KETMKFLNDRLANYLEKVRQLEQENAELETTLLER. Positions 140-150 are linker 1; sequence SKCHESTVCPD. Residues 151 to 251 form a coil 1B region; that stretch reads YQSYFRTIEE…HEQEVKILRS (101 aa). A linker 12 region spans residues 252–267; the sequence is QLGEKFRIELDIEPTI. The tract at residues 268-411 is coil 2; it reads DLNRVLGEMR…ATYRNLLESE (144 aa). Residues 416 to 449 form a tail region; it reads PCNPCSTPASCTSCPSCGPVTGGSPSGHGASMGR.

It belongs to the intermediate filament family.

The chain is Keratin, type I cuticular Ha7 (KRT37) from Homo sapiens (Human).